The following is a 330-amino-acid chain: MESNWTVHVFSRTLCHMLLWTAVLNLAAGTHDLPKAVVKLEPPWIQVLKEDTVTLTCEGTHNPGNSSTQWFHNGRSIRSQVQASYTFKATVNDSGEYRCQMEQTRLSDPVDLGVISDWLLLQTPQLVFLEGETITLRCHSWRNKLLNRISFFHNEKSVRYHHYSSNFSIPKANHSHSGDYYCKGSLGRTLHQSKPVTITVQGPKSSRSLPVLTIVAAVTGIAVAAIVIILVSLVYLKKKQVPALPGNPDHREMGETLPEEVGEYRQPSGGSVPVSPGPPSGLEPTSSSPYNPPDLEEAAKTEAENTITYSLLKHPEALDEETEHDYQNHI.

The N-terminal stretch at methionine 1–glycine 29 is a signal peptide. Topologically, residues threonine 30–proline 210 are extracellular. Ig-like C2-type domains lie at glutamate 50–leucine 106 and glycine 131–threonine 189. Cystine bridges form between cysteine 57/cysteine 99 and cysteine 138/cysteine 182. Residues asparagine 65, asparagine 92, asparagine 166, and asparagine 173 are each glycosylated (N-linked (GlcNAc...) asparagine). A helical membrane pass occupies residues valine 211 to valine 231. Residues serine 232–isoleucine 330 lie on the Cytoplasmic side of the membrane. The interval valine 261 to isoleucine 330 is disordered. Residue tyrosine 290 is modified to Phosphotyrosine. The short motif at isoleucine 307–leucine 312 is the ITIM motif element. The residue at position 309 (tyrosine 309) is a Phosphotyrosine; by SRC-type Tyr-kinases. Phosphotyrosine is present on tyrosine 326.

As to quaternary structure, interacts with FGR. Interacts with LYN. Glycosylated. Post-translationally, when coaggregated to BCR, isoform IIB1 and isoform IIB1' become tyrosine phosphorylated and bind to the SH2 domains of the protein tyrosine phosphatase PTPC1. Phosphorylated by SRC-type Tyr-kinases such as LYN, BLK, FYN and SYK. As to expression, widely expressed by cells of hemopoietic origin. The isoforms are differentially expressed. Isoform IIB1 is preferentially expressed by cells of the lymphoid lineage, isoform IIB2 by cells of the myeloid lineage, and isoform IIB3 is released by macrophages and is present in the serum. Isoform IIB1' is expressed in myeloid and lymphoid cell lines, in normal spleen cells, and in resting or LPS-activated B-cells but is not detected in mesenteric lymph node cells.

It localises to the cell membrane. Its subcellular location is the cytoplasm. The protein localises to the cytoskeleton. The protein resides in the secreted. Its function is as follows. Receptor for the Fc region of complexed immunoglobulins gamma. Low affinity receptor. Involved in a variety of effector and regulatory functions such as phagocytosis of antigen-antibody complexes from the circulation and modulation of antibody production by B-cells. Isoform IIB1 and isoform IIB1' form caps but fail to mediate endocytosis or phagocytosis. Isoform IIB2 can mediate the endocytosis of soluble immune complexes via clathrin-coated pits. Isoform IIB1 and isoform IIB2 can down-regulate B-cell, T-cell, and mast cell activation when coaggregated to B-cell receptors for AG (BCR), T-cell receptors for AG (TCR), and Fc receptors, respectively. The sequence is that of Low affinity immunoglobulin gamma Fc region receptor II (Fcgr2) from Mus musculus (Mouse).